The primary structure comprises 170 residues: Odorant-binding protein 2b (170 aa).

Positions 1 to 15 (MKTLFLGVTLGLAAA) are cleaved as a signal peptide. A disulfide bond links cysteine 74 and cysteine 166.

The protein belongs to the calycin superfamily. Lipocalin family. In terms of tissue distribution, strongly expressed in genital sphere organs such as the prostate and mammary glands.

The protein resides in the secreted. Functionally, probably binds and transports small hydrophobic volatile molecules. The chain is Odorant-binding protein 2b (OBP2B) from Homo sapiens (Human).